The chain runs to 339 residues: Phenylalanine--tRNA ligase alpha subunit (339 aa).

Glu254 contributes to the Mg(2+) binding site.

The protein belongs to the class-II aminoacyl-tRNA synthetase family. Phe-tRNA synthetase alpha subunit type 1 subfamily. As to quaternary structure, tetramer of two alpha and two beta subunits. It depends on Mg(2+) as a cofactor.

The protein resides in the cytoplasm. The enzyme catalyses tRNA(Phe) + L-phenylalanine + ATP = L-phenylalanyl-tRNA(Phe) + AMP + diphosphate + H(+). The chain is Phenylalanine--tRNA ligase alpha subunit from Acetivibrio thermocellus (strain ATCC 27405 / DSM 1237 / JCM 9322 / NBRC 103400 / NCIMB 10682 / NRRL B-4536 / VPI 7372) (Clostridium thermocellum).